Consider the following 119-residue polypeptide: Large ribosomal subunit protein bL20 (119 aa).

This sequence belongs to the bacterial ribosomal protein bL20 family.

Binds directly to 23S ribosomal RNA and is necessary for the in vitro assembly process of the 50S ribosomal subunit. It is not involved in the protein synthesizing functions of that subunit. This Shewanella woodyi (strain ATCC 51908 / MS32) protein is Large ribosomal subunit protein bL20.